Here is a 201-residue protein sequence, read N- to C-terminus: Imidazoleglycerol-phosphate dehydratase (201 aa).

It belongs to the imidazoleglycerol-phosphate dehydratase family.

It localises to the cytoplasm. It carries out the reaction D-erythro-1-(imidazol-4-yl)glycerol 3-phosphate = 3-(imidazol-4-yl)-2-oxopropyl phosphate + H2O. It participates in amino-acid biosynthesis; L-histidine biosynthesis; L-histidine from 5-phospho-alpha-D-ribose 1-diphosphate: step 6/9. This is Imidazoleglycerol-phosphate dehydratase from Synechococcus sp. (strain CC9311).